The primary structure comprises 359 residues: Medium-wave-sensitive opsin 1 (359 aa).

The Extracellular segment spans residues M1–V47. The interval D12 to P38 is required for 11-cis-retinal regeneration. N29 carries N-linked (GlcNAc...) asparagine glycosylation. Residues Y48–A72 form a helical membrane-spanning segment. Topologically, residues T73 to N84 are cytoplasmic. A helical transmembrane segment spans residues W85–I110. Residues Y111–E124 are Extracellular-facing. Cysteines 121 and 198 form a disulfide. Residues G125–W144 form a helical membrane-spanning segment. Residues E145 to L163 are Cytoplasmic-facing. Residues A164 to S187 form a helical membrane-spanning segment. The Extracellular segment spans residues R188–S213. The helical transmembrane segment at Y214 to I241 threads the bilayer. The Cytoplasmic portion of the chain corresponds to R242–R263. The helical transmembrane segment at M264–T287 threads the bilayer. Residues A288–H295 are Extracellular-facing. A helical membrane pass occupies residues P296–M320. An N6-(retinylidene)lysine modification is found at K307. The Cytoplasmic segment spans residues N321–A359.

Belongs to the G-protein coupled receptor 1 family. Opsin subfamily. As to quaternary structure, monomer. Homodimer. Homotetramer. Post-translationally, N-glycosylated. O-glycosylated. Phosphorylated on some or all of the serine and threonine residues present in the C-terminal region. As to expression, expressed in retina (at protein level). Expressed in cone photoreceptor cells (at protein level).

It localises to the cell membrane. Visual pigments are the light-absorbing molecules that mediate vision. They consist of an apoprotein, opsin, covalently linked to cis-retinal. May increase spectral sensitivity in dim light. The protein is Medium-wave-sensitive opsin 1 (Opn1mw) of Mus musculus (Mouse).